Reading from the N-terminus, the 425-residue chain is Spermatogenesis- and oogenesis-specific basic helix-loop-helix-containing protein 2 (425 aa).

Residues 201–252 (KISLLHSSKEKLRRERIKYCCEQLRTLLPYVKGRKNDAASVLEATVDYVKYI) enclose the bHLH domain.

Forms both hetero- and homodimers with SOHLH1.

The protein resides in the nucleus. Its subcellular location is the cytoplasm. Transcription regulator of both male and female germline differentiation. Suppresses genes involved in spermatogonial stem cells maintenance, and induces genes important for spermatogonial differentiation. Coordinates oocyte differentiation without affecting meiosis I. The protein is Spermatogenesis- and oogenesis-specific basic helix-loop-helix-containing protein 2 (SOHLH2) of Homo sapiens (Human).